The sequence spans 408 residues: Multidrug resistance protein MdtG (408 aa).

A run of 11 helical transmembrane segments spans residues 16-36, 58-78, 92-112, 115-135, 146-166, 173-193, 224-244, 256-276, 290-310, 319-339, and 378-398; these read LIVA…VMPF, IVFS…GGLA, LGMG…QFLI, ALLG…ATQV, TLST…GLLA, PVFF…LFCI, LFVT…ILTL, VAFI…LSAP, ILIT…YVQT, FLLG…LVYN, and AVFL…WNSL.

This sequence belongs to the major facilitator superfamily. DHA1 family. MdtG (TC 2.A.1.2.20) subfamily.

Its subcellular location is the cell inner membrane. Functionally, confers resistance to fosfomycin and deoxycholate. This chain is Multidrug resistance protein MdtG, found in Escherichia coli O6:K15:H31 (strain 536 / UPEC).